A 190-amino-acid chain; its full sequence is Holliday junction branch migration complex subunit RuvA (190 aa).

The domain I stretch occupies residues 1-65 (MIGNLRGIVD…ENVTQLYGFI (65 aa)). Residues 66–143 (SKEEQQCLRL…KLEINNNHFH (78 aa)) form a domain II region. The flexible linker stretch occupies residues 144 to 147 (SISE). Positions 147–190 (EDALSALINLGYERTKAYDTIKKIEDESPNLDTKDIIRMALKTI) are domain III.

It belongs to the RuvA family. In terms of assembly, homotetramer. Forms an RuvA(8)-RuvB(12)-Holliday junction (HJ) complex. HJ DNA is sandwiched between 2 RuvA tetramers; dsDNA enters through RuvA and exits via RuvB. An RuvB hexamer assembles on each DNA strand where it exits the tetramer. Each RuvB hexamer is contacted by two RuvA subunits (via domain III) on 2 adjacent RuvB subunits; this complex drives branch migration. In the full resolvosome a probable DNA-RuvA(4)-RuvB(12)-RuvC(2) complex forms which resolves the HJ.

The protein localises to the cytoplasm. Functionally, the RuvA-RuvB-RuvC complex processes Holliday junction (HJ) DNA during genetic recombination and DNA repair, while the RuvA-RuvB complex plays an important role in the rescue of blocked DNA replication forks via replication fork reversal (RFR). RuvA specifically binds to HJ cruciform DNA, conferring on it an open structure. The RuvB hexamer acts as an ATP-dependent pump, pulling dsDNA into and through the RuvAB complex. HJ branch migration allows RuvC to scan DNA until it finds its consensus sequence, where it cleaves and resolves the cruciform DNA. The polypeptide is Holliday junction branch migration complex subunit RuvA (Wolbachia pipientis subsp. Culex pipiens (strain wPip)).